Consider the following 779-residue polypeptide: Lysosome membrane protein 2-A (779 aa).

At 1 to 17 (MVKRGCCHRKMVNHKGC) the chain is on the cytoplasmic side. A helical transmembrane segment spans residues 18 to 38 (LVSGIFLAVIGAVLFILAFAL). At 39 to 732 (LPHLINQTTQ…LLNSQFKLIK (694 aa)) the chain is on the lumenal side. N-linked (GlcNAc...) asparagine glycosylation is found at N44, N86, N95, N114, N117, N201, N239, N262, N266, N277, N369, N410, N440, N508, N543, N601, N619, N651, and N693. Residues 733 to 753 (ILGFVPVIVVSIIGGIILIAG) traverse the membrane as a helical segment. Residues 754 to 779 (ISMFAFGFKKLRQQKQQGYQAIINNE) are Cytoplasmic-facing. The Tyrosine-type lysosomal sorting signal motif lies at 771-774 (GYQA).

The protein belongs to the CD36 family. Heavily glycosylated.

The protein localises to the lysosome membrane. In terms of biological role, may act as a lysosomal receptor. May be involved in macropinocytosis and fluid phase exocytosis. Binds to the anionic phospholipid phosphoinositol 4,5-bisphosphate, but not to phosphatidylcholine and only weakly to phosphatidylserine. The protein is Lysosome membrane protein 2-A (lmpA) of Dictyostelium discoideum (Social amoeba).